The chain runs to 470 residues: Glutamate--tRNA ligase 1 (470 aa).

Residues 15–25 (PSPTGTMHIGT) carry the 'HIGH' region motif. The 'KMSKS' region signature appears at 241 to 245 (KLSKR). Lys-244 is an ATP binding site.

This sequence belongs to the class-I aminoacyl-tRNA synthetase family. Glutamate--tRNA ligase type 1 subfamily. As to quaternary structure, monomer.

The protein resides in the cytoplasm. It catalyses the reaction tRNA(Glu) + L-glutamate + ATP = L-glutamyl-tRNA(Glu) + AMP + diphosphate. Catalyzes the attachment of glutamate to tRNA(Glu) in a two-step reaction: glutamate is first activated by ATP to form Glu-AMP and then transferred to the acceptor end of tRNA(Glu). This chain is Glutamate--tRNA ligase 1, found in Jannaschia sp. (strain CCS1).